We begin with the raw amino-acid sequence, 306 residues long: Aspartate carbamoyltransferase catalytic subunit (306 aa).

Carbamoyl phosphate contacts are provided by arginine 55 and threonine 56. L-aspartate is bound at residue lysine 85. Residues arginine 106, histidine 133, and glutamine 136 each coordinate carbamoyl phosphate. L-aspartate-binding residues include arginine 166 and arginine 228. Carbamoyl phosphate contacts are provided by leucine 264 and proline 265.

It belongs to the aspartate/ornithine carbamoyltransferase superfamily. ATCase family. Heterododecamer (2C3:3R2) of six catalytic PyrB chains organized as two trimers (C3), and six regulatory PyrI chains organized as three dimers (R2).

It catalyses the reaction carbamoyl phosphate + L-aspartate = N-carbamoyl-L-aspartate + phosphate + H(+). Its pathway is pyrimidine metabolism; UMP biosynthesis via de novo pathway; (S)-dihydroorotate from bicarbonate: step 2/3. Catalyzes the condensation of carbamoyl phosphate and aspartate to form carbamoyl aspartate and inorganic phosphate, the committed step in the de novo pyrimidine nucleotide biosynthesis pathway. This Serratia marcescens protein is Aspartate carbamoyltransferase catalytic subunit.